A 133-amino-acid chain; its full sequence is Salmonella pathogenicity island 2 protein C (133 aa).

Interacts with the mammalian NIPSNAP3A and HOOK3 proteins in infected cells.

The protein localises to the secreted. Its subcellular location is the cytoplasm. In terms of biological role, virulence protein that plays a central role in mammalian macrophage infection, by inhibiting phagosome-lysosome fusion and cellular trafficking, including trafficking of organelles that are devoid of Salmonella. May act by disrupting the function of the mammalian HOOK3 protein, a protein involved in the cellular traffic. Also required for actin ADP-ribosylase SpvB activity. This is Salmonella pathogenicity island 2 protein C (spiC) from Salmonella typhimurium (strain 14028s / SGSC 2262).